Consider the following 316-residue polypeptide: Annexin D5 (316 aa).

N-acetylalanine is present on Ala2. 4 Annexin repeats span residues 11-82 (PSPR…LWMP), 83-154 (EAVE…AYLN), 166-238 (ASVE…TILQ), and 242-313 (NSCF…SLLG). The Ca(2+) site is built by Phe24, Gly26, Gly28, and Glu68. The residue at position 95 (Ser95) is a Phosphoserine. Thr112 is modified (phosphothreonine). Residue Gly259 coordinates Ca(2+). A Phosphotyrosine modification is found at Tyr284. Positions 299 and 300 each coordinate Ca(2+).

Belongs to the annexin (TC 1.A.31.1) family. As to expression, expressed mainly in roots and flowers. Lower in stems and leaves.

This Arabidopsis thaliana (Mouse-ear cress) protein is Annexin D5 (ANN5).